Consider the following 382-residue polypeptide: Elloramycin glycosyltransferase ElmGT (382 aa).

This sequence belongs to the glycosyltransferase 28 family.

The catalysed reaction is 8-demethyltetracenomycin C + dTDP-beta-L-rhamnose = 8-demethyl-8-alpha-L-rhamnosyl-tetracenomycin C + dTDP + H(+). The protein operates within antibiotic biosynthesis. Glycosyltransferase that transfers an L-rhamnose moiety from dTDP-L-rhamnose to the elloramycin aglycone 8-demethyl-tetracenomycin C (8DMTC) in elloramycin biosynthesis, an antitumor polyketide. Possesses donor substrate flexibility: able to transfer at least 11 different sugars to 8DMTC, such as NDP-D-glucose, as well as NDP-L-digitoxose, including both L- and D-isomeric forms of some sugars. The sequence is that of Elloramycin glycosyltransferase ElmGT from Streptomyces olivaceus.